Reading from the N-terminus, the 1403-residue chain is MANCSQEELDEEFEQFMKELSDDSFENSDKTARQSKKEMKKKDTVPWWITEDDFKDDGLLGTNVSYLKTKKTSQPVMEIEEESAEKIQFLKSSGTSLLSTDSLETNELVVSELNHSSLGVGLDTLEEQEEKEQFFARLEKGLTSSIDYSRLNKELDSNDSTHFKALHSNQANAELTDDEHENESKHEELAENYSDDFEDEYVGAPLTTKDEEMPSKENSKSEKISVPKQEEEKTGMLANVVLLDSLDSVAEVNLDEQDKITPKPRCLPEMTENEMTGTGVSYGQSSSDVEALHQAYCHIAHSLGDEDKQKIESNTVEDIKSSVKGHPQENEENSKNISTMESDLPTVEELMKPIRIDSFGISGFDLQPVSSEKVAERKETEFFSSLPLKMNPNILSQDSQHVNLFFDKNDENVILQKTTNESMENSCPQVTEVTATEEHVDKMYLNILRKKITVNSSSLSQDDKINKTYRSQLSSEEEGAVMGKQVPYKKARSAPPLLKRKPQSGLYASVRSSGYGKPSSPLKMFSTLEKKTSEDIIKSKNLRSISTSNQPRKKEILSGTKLIKPAALDKPAHKTESCLSTRKKSENPTETDSCIQFQTDSLGYCGENKEKKLLMFKRVQEAEDKWRGAQALIEQIKATFSEKEKELENKLEELKKQQEKELFKLNQDNYILQAKLSSFEETNKKQRWLHFGEAADPVTGEKLKQIQKEIQEQETLLQGYQQENERLYNQVKDLQEQNKKNEERMFKENQSLFSEVASLKEQMHKSRFLSQVVEDSEPTRNQNFTDLLAELRMAQKEKDSLLEDIKRLKQDKQALEVDFEKMKKERDQAKDQIAYVTGEKLYEIKILEETHKQEISRLQKRLQWYAENQELLDKDALRLREANEEIEKLKLEIEKLKAESGNPSIRQKIRLKDKAADAKKIQDLERQVKEMEGILKRRYPNSLPALILAASAAGDTVDKNTVEFMEKRIKKLEADLEGKDEDAKKSLRTMEQQFQKMKIQYEQRLEQQEQLLACKLNQHDSPRIKALEKELDDIKEAHQITVRNLEAEIDVLKHQNAELDVKKNDKDDEDFQSIEFQVEQAHAKAKLVRLNEELAAKKREIQDLSKTVERLQKDRRMMLSNQNSKGREEMSAKRAKKDVLHSSKGNANSFPGTLDSKLYQPHTFTDSHVSEVLQENYRLKNELEGLISEKNELKMKSEAVMNQFENSMRRVKEDTAAHIASLKASHQREIEKLLCQNAVENSSSKVAELNRKIATQEVLIRHFQSQVNELQSKQESLVVSEVREEILQKEITKLLEELREAKENHTPEMKHFVGLEKKIKQMEMRHAQREQELQQIIQQTHQVVETEQNKEVEKWKRLAQLKNRELEKFRTELDSILDVLRELHRQGVVVPVAFADEMNAPEY.

The disordered stretch occupies residues 18 to 42 (KELSDDSFENSDKTARQSKKEMKKK). 2 positions are modified to phosphoserine: S157 and S160. Residues 170–231 (QANAELTDDE…EKISVPKQEE (62 aa)) form a disordered region. The span at 208–231 (TKDEEMPSKENSKSEKISVPKQEE) shows a compositional bias: basic and acidic residues. 2 positions are modified to phosphoserine: S474 and S475. Residues 476–504 (EEEGAVMGKQVPYKKARSAPPLLKRKPQS) are disordered. Residues 487–502 (PYKKARSAPPLLKRKP) are compositionally biased toward basic residues. Coiled-coil stretches lie at residues 617 to 670 (KRVQ…QDNY), 698 to 1121 (VTGE…MLSN), 1171 to 1206 (EVLQ…QFEN), and 1235 to 1386 (CQNA…LHRQ).

The protein belongs to the CEP162 family. As to quaternary structure, interacts with CEP290. Interacts with CPNE4. Interacts with alpha-tubulin.

It localises to the cytoplasm. Its subcellular location is the cytoskeleton. It is found in the microtubule organizing center. The protein localises to the centrosome. The protein resides in the centriole. It localises to the spindle. Its subcellular location is the nucleus. In terms of biological role, required to promote assembly of the transition zone in primary cilia. Acts by specifically recognizing and binding the axonemal microtubule. Localizes to the distal ends of centrioles before ciliogenesis and directly binds to axonemal microtubule, thereby promoting and restricting transition zone formation specifically at the cilia base. Required to mediate CEP290 association with microtubules. This is Centrosomal protein of 162 kDa (CEP162) from Homo sapiens (Human).